A 435-amino-acid chain; its full sequence is GTPase Obg (435 aa).

The Obg domain occupies 1 to 159 (MAFIDKCKIV…VEVLLELKTI (159 aa)). An OBG-type G domain is found at 160–329 (ADIGIIGLPN…MLDDVIKIYF (170 aa)). GTP-binding positions include 166–173 (GLPNAGKS), 191–195 (FTTLN), 212–215 (DIPG), 282–285 (NKID), and 310–312 (SAL). Residues Ser-173 and Thr-193 each coordinate Mg(2+). Positions 357–435 (KSKELDKTIE…IYDITLEFEE (79 aa)) constitute an OCT domain.

Belongs to the TRAFAC class OBG-HflX-like GTPase superfamily. OBG GTPase family. Monomer. The cofactor is Mg(2+).

It is found in the cytoplasm. An essential GTPase which binds GTP, GDP and possibly (p)ppGpp with moderate affinity, with high nucleotide exchange rates and a fairly low GTP hydrolysis rate. Plays a role in control of the cell cycle, stress response, ribosome biogenesis and in those bacteria that undergo differentiation, in morphogenesis control. The protein is GTPase Obg of Ureaplasma parvum serovar 3 (strain ATCC 27815 / 27 / NCTC 11736).